A 430-amino-acid chain; its full sequence is Histidinol dehydrogenase (430 aa).

NAD(+) is bound by residues tyrosine 129, glutamine 190, and asparagine 213. Substrate-binding residues include serine 236, glutamine 258, and histidine 261. The Zn(2+) site is built by glutamine 258 and histidine 261. Residues glutamate 326 and histidine 327 each act as proton acceptor in the active site. The substrate site is built by histidine 327, aspartate 360, glutamate 414, and histidine 419. Aspartate 360 is a Zn(2+) binding site. A Zn(2+)-binding site is contributed by histidine 419.

This sequence belongs to the histidinol dehydrogenase family. The cofactor is Zn(2+).

The enzyme catalyses L-histidinol + 2 NAD(+) + H2O = L-histidine + 2 NADH + 3 H(+). It participates in amino-acid biosynthesis; L-histidine biosynthesis; L-histidine from 5-phospho-alpha-D-ribose 1-diphosphate: step 9/9. Functionally, catalyzes the sequential NAD-dependent oxidations of L-histidinol to L-histidinaldehyde and then to L-histidine. The polypeptide is Histidinol dehydrogenase (Caldanaerobacter subterraneus subsp. tengcongensis (strain DSM 15242 / JCM 11007 / NBRC 100824 / MB4) (Thermoanaerobacter tengcongensis)).